The sequence spans 265 residues: L-histidine 2-aminobutanoyltransferase (265 aa).

Belongs to the methyltransferase superfamily. CntL family.

It carries out the reaction L-histidine + S-adenosyl-L-methionine = (2S)-2-amino-4-{[(1S)-1-carboxy-2-(1H-imidazol-4-yl)ethyl]amino}butanoate + S-methyl-5'-thioadenosine + H(+). Functionally, catalyzes the nucleophilic attack of one alpha-aminobutanoate moiety from SAM onto L-histidine to produce the intermediate (2S)-2-amino-4-{[(1S)-1-carboxy-2-(1H-imidazol-4-yl)ethyl]amino}butanoate. Functions in the biosynthesis of the metallophore yersinopine, which is involved in metal acquisition and thus enables bacterial growth inside the host, where metal access is limited. Therefore, this enzyme probably contributes to Yersinia virulence. The polypeptide is L-histidine 2-aminobutanoyltransferase (Yersinia pestis).